The primary structure comprises 302 residues: Pseudouridine-5'-phosphate glycosidase (302 aa).

The active-site Proton donor is Glu-25. Positions 86 and 106 each coordinate substrate. Asp-138 contributes to the Mn(2+) binding site. 140-142 lines the substrate pocket; it reads SAD. Lys-159 (nucleophile) is an active-site residue.

Belongs to the pseudouridine-5'-phosphate glycosidase family. Homotrimer. Mn(2+) serves as cofactor.

The enzyme catalyses D-ribose 5-phosphate + uracil = psi-UMP + H2O. Catalyzes the reversible cleavage of pseudouridine 5'-phosphate (PsiMP) to ribose 5-phosphate and uracil. Functions biologically in the cleavage direction, as part of a pseudouridine degradation pathway. The chain is Pseudouridine-5'-phosphate glycosidase from Glaesserella parasuis serovar 5 (strain SH0165) (Haemophilus parasuis).